Reading from the N-terminus, the 77-residue chain is Small, acid-soluble spore protein Tlp (77 aa).

Belongs to the Tlp family.

The protein resides in the spore core. In Geobacillus sp. (strain WCH70), this protein is Small, acid-soluble spore protein Tlp.